The primary structure comprises 217 residues: Adenylate kinase (217 aa).

10–15 contacts ATP; sequence GAGKGT. The tract at residues 30–59 is NMP; it reads STGDIFRSNIKNGTELGRKAKEYIDKGLLV. Residues Thr31, Arg36, 57-59, 85-88, and Gln92 contribute to the AMP site; these read LLV and GFPR. The segment at 126-163 is LID; the sequence is GRRVCSKCGMSYHIVYNQPKVENICDSCNGELIQRDDD. Residue Arg127 participates in ATP binding. Residues Cys130 and Cys133 each contribute to the Zn(2+) site. ATP is bound at residue 136-137; sequence SY. Positions 150 and 153 each coordinate Zn(2+). AMP contacts are provided by Arg160 and Arg171. Glu199 contacts ATP.

The protein belongs to the adenylate kinase family. Monomer.

It localises to the cytoplasm. It carries out the reaction AMP + ATP = 2 ADP. The protein operates within purine metabolism; AMP biosynthesis via salvage pathway; AMP from ADP: step 1/1. Catalyzes the reversible transfer of the terminal phosphate group between ATP and AMP. Plays an important role in cellular energy homeostasis and in adenine nucleotide metabolism. This is Adenylate kinase from Acetivibrio thermocellus (strain ATCC 27405 / DSM 1237 / JCM 9322 / NBRC 103400 / NCIMB 10682 / NRRL B-4536 / VPI 7372) (Clostridium thermocellum).